The chain runs to 232 residues: Ribose-5-phosphate isomerase A (232 aa).

Residues 31-34, 87-90, and 100-103 contribute to the substrate site; these read TGST, DGAD, and KGGG. Glu109 functions as the Proton acceptor in the catalytic mechanism. Lys127 contributes to the substrate binding site.

Belongs to the ribose 5-phosphate isomerase family. As to quaternary structure, homodimer.

It carries out the reaction aldehydo-D-ribose 5-phosphate = D-ribulose 5-phosphate. It functions in the pathway carbohydrate degradation; pentose phosphate pathway; D-ribose 5-phosphate from D-ribulose 5-phosphate (non-oxidative stage): step 1/1. Functionally, catalyzes the reversible conversion of ribose-5-phosphate to ribulose 5-phosphate. The chain is Ribose-5-phosphate isomerase A from Bifidobacterium longum (strain NCC 2705).